The following is a 261-amino-acid chain: 5'-nucleotidase SurE (261 aa).

Asp12, Asp13, Ser43, and Asn99 together coordinate a divalent metal cation.

It belongs to the SurE nucleotidase family. The cofactor is a divalent metal cation.

It is found in the cytoplasm. The catalysed reaction is a ribonucleoside 5'-phosphate + H2O = a ribonucleoside + phosphate. Functionally, nucleotidase that shows phosphatase activity on nucleoside 5'-monophosphates. This chain is 5'-nucleotidase SurE, found in Polynucleobacter asymbioticus (strain DSM 18221 / CIP 109841 / QLW-P1DMWA-1) (Polynucleobacter necessarius subsp. asymbioticus).